A 455-amino-acid polypeptide reads, in one-letter code: 3-phosphoshikimate 1-carboxyvinyltransferase (455 aa).

Residues 1–19 (MSHGASSRPATARKSSGLS) are compositionally biased toward polar residues. The tract at residues 1-25 (MSHGASSRPATARKSSGLSGTVRIP) is disordered. Lys28 contacts phosphoenolpyruvate. Residues Ser29 and Arg33 each contribute to the 3-phosphoshikimate site. A phosphoenolpyruvate-binding site is contributed by Arg128. 3-phosphoshikimate is bound by residues Ser173, Ala174, Gln175, Asp326, and Lys353. Position 175 (Gln175) interacts with phosphoenolpyruvate. Catalysis depends on Asp326, which acts as the Proton acceptor. Positions 357 and 405 each coordinate phosphoenolpyruvate.

The protein belongs to the EPSP synthase family. As to quaternary structure, monomer.

It is found in the cytoplasm. It carries out the reaction 3-phosphoshikimate + phosphoenolpyruvate = 5-O-(1-carboxyvinyl)-3-phosphoshikimate + phosphate. It functions in the pathway metabolic intermediate biosynthesis; chorismate biosynthesis; chorismate from D-erythrose 4-phosphate and phosphoenolpyruvate: step 6/7. Its activity is regulated as follows. Is resistant to inhibition by glyphosate (glyphosate-tolerant) like other members of class II EPSPS, in contrast to class I EPSPS, which is glyphosate-sensitive. Is much less sensitive to inhibition by the (R)-difluoromethyl and (R)-phosphonate analogs of the tetrahedral reaction intermediate than the representative class I EPSPS from E.coli. Is highly activated in the presence of cations, such as NH4(+), Rb(+), and K(+). Functionally, catalyzes the transfer of the enolpyruvyl moiety of phosphoenolpyruvate (PEP) to the 5-hydroxyl of shikimate-3-phosphate (S3P) to produce enolpyruvyl shikimate-3-phosphate and inorganic phosphate. This chain is 3-phosphoshikimate 1-carboxyvinyltransferase, found in Agrobacterium sp. (strain CP4).